The chain runs to 352 residues: Nicotinate-nucleotide--dimethylbenzimidazole phosphoribosyltransferase (352 aa).

Glu-316 (proton acceptor) is an active-site residue.

The protein belongs to the CobT family.

The enzyme catalyses 5,6-dimethylbenzimidazole + nicotinate beta-D-ribonucleotide = alpha-ribazole 5'-phosphate + nicotinate + H(+). It participates in nucleoside biosynthesis; alpha-ribazole biosynthesis; alpha-ribazole from 5,6-dimethylbenzimidazole: step 1/2. Its function is as follows. Catalyzes the synthesis of alpha-ribazole-5'-phosphate from nicotinate mononucleotide (NAMN) and 5,6-dimethylbenzimidazole (DMB). The polypeptide is Nicotinate-nucleotide--dimethylbenzimidazole phosphoribosyltransferase (Clostridium acetobutylicum (strain ATCC 824 / DSM 792 / JCM 1419 / IAM 19013 / LMG 5710 / NBRC 13948 / NRRL B-527 / VKM B-1787 / 2291 / W)).